A 317-amino-acid polypeptide reads, in one-letter code: Zinc finger protein 771 (317 aa).

A compositionally biased stretch (acidic residues) spans 1 to 17 (MPGEQQAEEEEEEEMQE). The segment at 1–63 (MPGEQQAEEE…APSADPARPH (63 aa)) is disordered. K33 is covalently cross-linked (Glycyl lysine isopeptide (Lys-Gly) (interchain with G-Cter in SUMO2)). Basic and acidic residues predominate over residues 33–49 (KYEVVKLKIPMDNKEVP). C2H2-type zinc fingers lie at residues 63-85 (HACP…ARTH), 91-113 (FGCT…GRTH), 119-141 (YECP…RRRH), 147-169 (YACA…LRVH), 175-197 (YACP…RRTH), 203-225 (YACA…RRVH), 231-253 (HRCA…ARTH), and 259-281 (YPCA…RRAH).

This sequence belongs to the krueppel C2H2-type zinc-finger protein family.

It is found in the nucleus. Its function is as follows. May be involved in transcriptional regulation. This chain is Zinc finger protein 771 (ZNF771), found in Homo sapiens (Human).